Reading from the N-terminus, the 156-residue chain is Small ribosomal subunit protein uS7 (156 aa).

Belongs to the universal ribosomal protein uS7 family. Part of the 30S ribosomal subunit. Contacts proteins S9 and S11.

One of the primary rRNA binding proteins, it binds directly to 16S rRNA where it nucleates assembly of the head domain of the 30S subunit. Is located at the subunit interface close to the decoding center, probably blocks exit of the E-site tRNA. This chain is Small ribosomal subunit protein uS7, found in Campylobacter curvus (strain 525.92).